Consider the following 235-residue polypeptide: MTELARLKFYATQPHTCSYLPEEQATTLFLDPSQPMDVQVYADLSDMGFRRSGDHLYRPHCQNCSACVPARIPVNLFVPDRQQKRILKRNADIQVSSAKPVFTQEYFDLYQRYIEQRHADGDMFPPSREQFSTFLVRDLPFSRFYEFRVDQRLLAVAVTDLLPNGLSAVYTFYEPDEERRSLGRYAILWQIGEATRLQLQAVYLGYWIKNCKKMNYKTQYRPIELLTNQRWVTLY.

This sequence belongs to the R-transferase family. Bpt subfamily.

Its subcellular location is the cytoplasm. The enzyme catalyses N-terminal L-glutamyl-[protein] + L-leucyl-tRNA(Leu) = N-terminal L-leucyl-L-glutamyl-[protein] + tRNA(Leu) + H(+). It catalyses the reaction N-terminal L-aspartyl-[protein] + L-leucyl-tRNA(Leu) = N-terminal L-leucyl-L-aspartyl-[protein] + tRNA(Leu) + H(+). In terms of biological role, functions in the N-end rule pathway of protein degradation where it conjugates Leu from its aminoacyl-tRNA to the N-termini of proteins containing an N-terminal aspartate or glutamate. The sequence is that of Aspartate/glutamate leucyltransferase from Pseudomonas syringae pv. tomato (strain ATCC BAA-871 / DC3000).